A 306-amino-acid polypeptide reads, in one-letter code: Serrate RNA effector molecule homolog (306 aa).

The segment at 1–28 (HKEEELLGSSGGPPPEEPPKEGNPAEIN) is disordered. Thr101 carries the phosphothreonine modification. At Ser109 the chain carries Phosphoserine. Residues 251–284 (GPPYPHGPYGAGRGNYDAFRGQGGYPGKPRNRMV) form a disordered region. An omega-N-methylarginine mark is found at Arg263, Arg270, and Arg280.

Belongs to the ARS2 family. In terms of assembly, interacts with CASP8AP2, ERBB4, NCBP1/CBP80 and DROSHA. Interacts with LUZP4. Interacts with NCBP2/CBP20 and NCBP3.

The protein resides in the nucleus. It localises to the nucleoplasm. The protein localises to the cytoplasm. Functionally, acts as a mediator between the cap-binding complex (CBC) and the primary microRNAs (miRNAs) processing machinery during cell proliferation. Contributes to the stability and delivery of capped primary miRNA transcripts to the primary miRNA processing complex containing DGCR8 and DROSHA, thereby playing a role in RNA-mediated gene silencing (RNAi) by miRNAs. Binds capped RNAs (m7GpppG-capped RNA); however interaction is probably mediated via its interaction with NCBP1/CBP80 component of the CBC complex. Involved in cell cycle progression at S phase. Does not directly confer arsenite resistance but rather modulates arsenic sensitivity. Independently of its activity on miRNAs, necessary and sufficient to promote neural stem cell self-renewal. Does so by directly binding SOX2 promoter and positively regulating its transcription. The polypeptide is Serrate RNA effector molecule homolog (SRRT) (Cricetulus griseus (Chinese hamster)).